The following is a 559-amino-acid chain: CTP synthase (559 aa).

An amidoligase domain region spans residues 1-270; the sequence is MTKFVFVTGG…DGLICDKLRI (270 aa). S13 is a binding site for CTP. S13 contacts UTP. ATP-binding positions include 14 to 19 and D71; that span reads SLGKGI. Positions 71 and 144 each coordinate Mg(2+). CTP contacts are provided by residues 151-153, 191-196, and K227; these read DIE and KTKPTQ. UTP-binding positions include 191 to 196 and K227; that span reads KTKPTQ. The Glutamine amidotransferase type-1 domain occupies 295–547; the sequence is SIAMVGKYVD…IKAALDHKAR (253 aa). G356 contributes to the L-glutamine binding site. C383 serves as the catalytic Nucleophile; for glutamine hydrolysis. Residues 384–387, E407, and R473 contribute to the L-glutamine site; that span reads LGMQ. Active-site residues include H520 and E522.

Belongs to the CTP synthase family. As to quaternary structure, homotetramer.

It catalyses the reaction UTP + L-glutamine + ATP + H2O = CTP + L-glutamate + ADP + phosphate + 2 H(+). The enzyme catalyses L-glutamine + H2O = L-glutamate + NH4(+). It carries out the reaction UTP + NH4(+) + ATP = CTP + ADP + phosphate + 2 H(+). It functions in the pathway pyrimidine metabolism; CTP biosynthesis via de novo pathway; CTP from UDP: step 2/2. Allosterically activated by GTP, when glutamine is the substrate; GTP has no effect on the reaction when ammonia is the substrate. The allosteric effector GTP functions by stabilizing the protein conformation that binds the tetrahedral intermediate(s) formed during glutamine hydrolysis. Inhibited by the product CTP, via allosteric rather than competitive inhibition. Functionally, catalyzes the ATP-dependent amination of UTP to CTP with either L-glutamine or ammonia as the source of nitrogen. Regulates intracellular CTP levels through interactions with the four ribonucleotide triphosphates. In Variovorax paradoxus (strain S110), this protein is CTP synthase.